A 184-amino-acid polypeptide reads, in one-letter code: FMRFamide-related peptides (184 aa).

Residues 1–44 (MLVSSSVLKDDSSLRIFKESPNEFEYIIKRHDMDDRKEDTESKE) constitute a propeptide that is removed on maturation. Phenylalanine amide is present on phenylalanine 56. The propeptide occupies 59–83 (GQSFFNNLDNSAFDNEIDSKVSRHP). The residue at position 94 (phenylalanine 94) is a Phenylalanine amide. A propeptide spanning residues 97-107 (SGMKSTNDEQP) is cleaved from the precursor. A Phenylalanine amide modification is found at phenylalanine 119. Positions 122-184 (NIQIVPTDFD…SLETNSNHRE (63 aa)) are excised as a propeptide.

This sequence belongs to the FARP (FMRFamide related peptide) family. As to expression, expressed throughout the central nervous system.

It is found in the secreted. Its function is as follows. In insects, FMRFamide and related peptides have modulatory actions at skeletal neuromuscular junctions, and peptides that are immunologically related to FMRFamide are released into the circulation from neurohemal organs. This Camponotus floridanus (Florida carpenter ant) protein is FMRFamide-related peptides.